We begin with the raw amino-acid sequence, 238 residues long: tRNA (guanine-N(7)-)-methyltransferase (238 aa).

Positions 68, 93, 120, and 143 each coordinate S-adenosyl-L-methionine. Asp143 is a catalytic residue. Substrate-binding positions include Lys147, Asp179, and 216 to 219 (TKFE).

The protein belongs to the class I-like SAM-binding methyltransferase superfamily. TrmB family.

The catalysed reaction is guanosine(46) in tRNA + S-adenosyl-L-methionine = N(7)-methylguanosine(46) in tRNA + S-adenosyl-L-homocysteine. It functions in the pathway tRNA modification; N(7)-methylguanine-tRNA biosynthesis. Catalyzes the formation of N(7)-methylguanine at position 46 (m7G46) in tRNA. The polypeptide is tRNA (guanine-N(7)-)-methyltransferase (Shewanella baltica (strain OS223)).